Consider the following 1045-residue polypeptide: MGPKQRVRKDNYWDSGEADKDREEAEKLHKKGQQQSDSDSDSDDIPISKKKPTSKFAPVDESSSESEESSSEEEVQKKPSKPAAKQSKKVAPTNNKKKPVVESSSSEEEESESESEESSEEDTKKKPSKPAAKQSKKVAPTNNNNNKKKPVVESSSEESESESEESSSEEDTKKKPSKPAAKQNKKAPAKKAAAVESSSESEEESSSSEEEEKPTKPTQNNNNKKNNAKKPPAAKPSAAKQQAKKPAPKKPEEPEVLSGFLLKQRQEEERIAREKEEKRIREEEEKKRAAEQKIIDDEKARLKSIENSKKRAEKKEKQAGAAAEADRMAKLAKLGVNISAVGEKKEKSTNKTKSGGKKQNQVSSITESVEKLKIEEPTSAPKDDVVEVMDSWDNDDYETVEEIQKKKEEEAKRKEEEEEAQRLAAKEEKKKAKAAAAAAAAALIPTTDPTTTFADKSYRSPIICILGHVDTGKTSLLDKIRNTNVQGGEARGITQQIGASFIPVDAIKEQTKSFAEKIKMDFKLPGLLLIDTPGHESFNNLRSRGSGLCDLAILVIDIMHGLQAQTLESINLLRMRKTPFIVALNKVDRIYDWKPCVNTDFKEAYKIQSKSAAQEFDYKVKDIIAALAGQELNAELYWRNKDHRKYVSLVPTSANTGEGISDLMLVVIQLMQKLMLDKVEFTNQLQCTLLEVKVIEGFGTTIDVVLVNGTLNEGDKIVVSGFNGPIETSIRSLLTPPPLRESRVKSQFINHKSIRAAMGIKIVAPGLEKAVPGTSLHVVGPNDDIEKIRAEAKREVDSVLNDVETSGIGVSVQASTLGSLEAFLNFLKKIKIPVANVAIGPVHKKHIMNASIMLDKDPKYAILLAFDVKIEESAIQAANEMKVQVLSDETIYLFEEKLKKHFGAIKEKLRAETASICVWPCILEVTNVFRNSNPILVGVRVKEGTLRIGTPICVPESNCADVGKVIGIKLNEKDVTLAKKDDVVSVAIDDNNTKTTIYRHFDDKKQWMSKITRESLDALKEGWSEDLTKQDIQLLKFMKTVYKIQ.

Disordered stretches follow at residues 1 to 325 (MGPK…AAEA) and 339 to 384 (SAVG…PKDD). Residues 8–27 (RKDNYWDSGEADKDREEAEK) are compositionally biased toward basic and acidic residues. The segment covering 62–73 (SSSESEESSSEE) has biased composition (acidic residues). The span at 81–92 (KPAAKQSKKVAP) shows a compositional bias: low complexity. Composition is skewed to acidic residues over residues 105–120 (SSEE…ESSE), 155–169 (SSEE…SSSE), and 199–212 (SESE…EEEE). Residues 216-241 (KPTQNNNNKKNNAKKPPAAKPSAAKQ) show a composition bias toward low complexity. Basic and acidic residues predominate over residues 264–325 (QRQEEERIAR…EKQAGAAAEA (62 aa)). Over residues 351-361 (KTKSGGKKQNQ) the composition is skewed to low complexity. The span at 368-384 (SVEKLKIEEPTSAPKDD) shows a compositional bias: basic and acidic residues. One can recognise a tr-type G domain in the interval 458 to 675 (YRSPIICILG…VVIQLMQKLM (218 aa)). A G1 region spans residues 467–474 (GHVDTGKT). 467–474 (GHVDTGKT) is a GTP binding site. Positions 492-496 (GITQQ) are G2. The interval 531-534 (DTPG) is G3. The tract at residues 585-588 (NKVD) is G4. The tract at residues 653–655 (SAN) is G5.

This sequence belongs to the TRAFAC class translation factor GTPase superfamily. Classic translation factor GTPase family. IF-2 subfamily. A monovalent cation is required as a cofactor.

Its subcellular location is the cytoplasm. The enzyme catalyses GTP + H2O = GDP + phosphate + H(+). Plays a role in translation initiation. Translational GTPase that catalyzes the joining of the 40S and 60S subunits to form the 80S initiation complex with the initiator methionine-tRNA in the P-site base paired to the start codon. GTP binding and hydrolysis induces conformational changes in the enzyme that renders it active for productive interactions with the ribosome. The release of the enzyme after formation of the initiation complex is a prerequisite to form elongation-competent ribosomes. In Dictyostelium discoideum (Social amoeba), this protein is Eukaryotic translation initiation factor 5B (eif5b).